Reading from the N-terminus, the 1453-residue chain is DNA-directed RNA polymerase IV subunit 1 (1453 aa).

7 residues coordinate Zn(2+): Cys-56, Cys-59, Cys-67, His-70, Cys-97, Cys-100, and Cys-121. Residues Asp-447, Asp-449, and Asp-451 each contribute to the Mg(2+) site. The bridging helix stretch occupies residues 806–818 (PLESFVHSVTSRD).

The protein belongs to the RNA polymerase beta' chain family. Component of the RNA polymerase IV complex. Interacts with NRPD2, NRPD3, NRPD3B, NRPD4, NRPD5, NRPD5B, NRPD6A, NRPD7, NRPD7B, NRPD9A, NRPD9B, NRPD10, NRPD11, NRPD12, RDR2, RDM4, CLSY1, CLSY2, CLSY3, CLSY4 and SHH1. Mostly expressed in flowers, and, to a lower extent, in leaves.

The protein localises to the nucleus. It catalyses the reaction RNA(n) + a ribonucleoside 5'-triphosphate = RNA(n+1) + diphosphate. In terms of biological role, DNA-dependent RNA polymerase catalyzes the transcription of DNA into RNA using the four ribonucleoside triphosphates as substrates. Largest and catalytic component of RNA polymerase IV which mediates 24-nt short-interfering RNAs (siRNA) accumulation. Implicated in siRNA-directed heterochromatin formation through the action of DCL3 and AGO4, and subsequent DNA methylation-dependent silencing of targeted sequences. Essential component of a self-reinforcing loop coupling de novo DNA methylation to siRNA production. Required for intercellular but not intracellular RNA interference (RNAi) leading to systemic post-transcriptional gene silencing. Involved in the maintenance of post-transcriptional RNA silencing. The protein is DNA-directed RNA polymerase IV subunit 1 (NRPD1) of Arabidopsis thaliana (Mouse-ear cress).